The chain runs to 777 residues: Aconitate hydratase, mitochondrial (777 aa).

Substrate contacts are provided by residues Q96 and 189–191 (DSH). The [4Fe-4S] cluster site is built by C383, C446, and C449. Residues R472, R477, R605, and 668-669 (SR) each bind substrate.

This sequence belongs to the aconitase/IPM isomerase family. Monomer. It depends on [4Fe-4S] cluster as a cofactor.

Its subcellular location is the mitochondrion. It carries out the reaction citrate = D-threo-isocitrate. It functions in the pathway carbohydrate metabolism; tricarboxylic acid cycle; isocitrate from oxaloacetate: step 2/2. In terms of biological role, catalyzes the isomerization of citrate to isocitrate via cis-aconitate, a step in the citric acid cycle. The chain is Aconitate hydratase, mitochondrial (ACO1) from Candida albicans (strain SC5314 / ATCC MYA-2876) (Yeast).